We begin with the raw amino-acid sequence, 586 residues long: MKRTHNATELDIHLVGREVMLNGWVDTRRDHGGLIFVDLRDRSGIIQLVFSPEVKEEAFHLAEQIRSEYVIAVRGKLSLRPEATENPNLKTGKVEVYVEDIEVLSPAKTPPFYIENDIDVDENLRLKYRYLDLRRPEMRDNLLLRHRVVKCMRDFLDSRGFIEIETPILTKSTPEGARDYLVPSRVHPGEFYALPQSPQIFKQILMVAGMEKYFQIARCFRDEDLRADRQPEFTQLDMEMSFVDEEDIIVLVEEMMAEIFFKAAGKVIRTPFPRLAYDDAMINYGSDKPDLRFGLEIVELSEMLQNTQFKVFASALQSGGVVRALNAKGCGSFTRREIDALGAMAVENGAKGMAWILVQENELRSPITKFLSEEEIEQILMTTGAEAGDLILFGADQAEIVARVMGILRLELGRKKGLIAEEELNFVWVTDFPLLEYDEEEKRYQAKHHPFTSPRLEDIEIMDSEPGRVKARAYDLVLNGTELGGGSIRIHRREWQEKMFSVLGMSQEEARDKFGFMLEAFEYGTPPHGGIAFGVDRLLMLLAGRNSVRDVMAFPKTQSASCPMTEAPSTVSARQLRELALRIREK.

L-aspartate is bound at residue glutamate 175. Residues 199 to 202 (QIFK) are aspartate. Residue arginine 221 coordinates L-aspartate. Residues 221–223 (RDE) and glutamine 230 each bind ATP. Histidine 448 contributes to the L-aspartate binding site. Glutamate 482 contributes to the ATP binding site. Position 489 (arginine 489) interacts with L-aspartate. Residue 534–537 (GVDR) coordinates ATP.

This sequence belongs to the class-II aminoacyl-tRNA synthetase family. Type 1 subfamily. As to quaternary structure, homodimer.

It localises to the cytoplasm. It catalyses the reaction tRNA(Asx) + L-aspartate + ATP = L-aspartyl-tRNA(Asx) + AMP + diphosphate. In terms of biological role, aspartyl-tRNA synthetase with relaxed tRNA specificity since it is able to aspartylate not only its cognate tRNA(Asp) but also tRNA(Asn). Reaction proceeds in two steps: L-aspartate is first activated by ATP to form Asp-AMP and then transferred to the acceptor end of tRNA(Asp/Asn). This is Aspartate--tRNA(Asp/Asn) ligase from Syntrophomonas wolfei subsp. wolfei (strain DSM 2245B / Goettingen).